Here is a 238-residue protein sequence, read N- to C-terminus: End-binding protein 1 (238 aa).

The 103-residue stretch at 15-117 (FVGRVSLLKW…FFQWFKWFFD (103 aa)) folds into the Calponin-homology (CH) domain. The interaction with aurora kinase stretch occupies residues 101 to 238 (KYMDNFEFFQ…EDILYAEYHQ (138 aa)). Residues 124–165 (KSGATESGSANAVTKTSKPGNRSGSTAASMQNPKASSTSGPS) are compositionally biased toward polar residues. The disordered stretch occupies residues 124–169 (KSGATESGSANAVTKTSKPGNRSGSTAASMQNPKASSTSGPSIDSK). At Ser-148 the chain carries Phosphoserine. In terms of domain architecture, EB1 C-terminal spans 156 to 238 (PKASSTSGPS…EDILYAEYHQ (83 aa)).

The protein belongs to the MAPRE family. Homodimer; disulfide-linked and via interaction of the C-terminal EB1-specific domains. Interacts with BOP1 (via C-terminal WD repeats). Interacts with giardin subunit gamma, neurogenic locus notch homolog protein, GL50803_8358 and GL50803_11327. Interacts (via C-terminal residues 101-238) with aurora kinase. Interacts with tubulin gamma chain. Post-translationally, phosphorylated in vitro by aurora kinase. Phosphorylation is important for cell division.

Its subcellular location is the nucleus membrane. The protein localises to the cytoplasm. It localises to the cytoskeleton. It is found in the spindle. The protein resides in the nucleus envelope. Its subcellular location is the flagellum axoneme. The protein localises to the cell projection. It localises to the cilium. It is found in the flagellum. In terms of biological role, involved in cell division. Involved in mitosis. Regulates dynamics of microtubules (MTs) during mitosis. Required for cytokinesis. Binds polymerized MTs in vitro. Is able to rescue a mitotic division defect, the proper positioning of the nucleus, of the S.cerevisiae BIM1 knockout mutant in a complementation assay. May play a role in spindle positioning and MT distribution. May be involved in MT nucleation for the formation of median bodies and in the biogenesis of flagella. Based on its localization to both the flagellar exit point and the distal flagellar tips, it may mediate the transition from anterograde to retrograde intraflagellar transport (IFT). The protein is End-binding protein 1 of Giardia intestinalis (strain ATCC 50803 / WB clone C6) (Giardia lamblia).